The following is a 184-amino-acid chain: NADH-quinone oxidoreductase subunit B 2 (184 aa).

Residues Cys59, Cys60, Cys125, and Cys153 each contribute to the [4Fe-4S] cluster site.

This sequence belongs to the complex I 20 kDa subunit family. As to quaternary structure, NDH-1 is composed of 14 different subunits. Subunits NuoB, C, D, E, F, and G constitute the peripheral sector of the complex. [4Fe-4S] cluster is required as a cofactor.

Its subcellular location is the cell inner membrane. It carries out the reaction a quinone + NADH + 5 H(+)(in) = a quinol + NAD(+) + 4 H(+)(out). NDH-1 shuttles electrons from NADH, via FMN and iron-sulfur (Fe-S) centers, to quinones in the respiratory chain. Couples the redox reaction to proton translocation (for every two electrons transferred, four hydrogen ions are translocated across the cytoplasmic membrane), and thus conserves the redox energy in a proton gradient. The sequence is that of NADH-quinone oxidoreductase subunit B 2 from Solibacter usitatus (strain Ellin6076).